A 355-amino-acid polypeptide reads, in one-letter code: Serum paraoxonase/arylesterase 1 (355 aa).

Residues Cys-42 and Cys-353 are joined by a disulfide bond. Ca(2+)-binding residues include Glu-53 and Asp-54. Residue His-115 is the Proton acceptor of the active site. Ca(2+)-binding residues include Ile-117, Asn-168, Asp-169, and Asn-224. Residue Asn-253 is glycosylated (N-linked (GlcNAc...) asparagine). Ca(2+) contacts are provided by Asp-269 and Asn-270. 2 N-linked (GlcNAc...) asparagine glycosylation sites follow: Asn-270 and Asn-324.

It belongs to the paraoxonase family. As to quaternary structure, homodimer. Heterooligomer with phosphate-binding protein (HPBP). Interacts with CLU. It depends on Ca(2+) as a cofactor. In terms of processing, glycosylated. The signal sequence is not cleaved. Post-translationally, present in two forms, form B contains a disulfide bond, form A does not. In terms of tissue distribution, plasma, associated with HDL (at protein level). Expressed in liver, but not in heart, brain, placenta, lung, skeletal muscle, kidney or pancreas.

The protein localises to the secreted. It is found in the extracellular space. The catalysed reaction is a phenyl acetate + H2O = a phenol + acetate + H(+). It carries out the reaction An aryl dialkyl phosphate + H2O = dialkyl phosphate + an aryl alcohol.. It catalyses the reaction an N-acyl-L-homoserine lactone + H2O = an N-acyl-L-homoserine + H(+). Hydrolyzes the toxic metabolites of a variety of organophosphorus insecticides. Capable of hydrolyzing a broad spectrum of organophosphate substrates and lactones, and a number of aromatic carboxylic acid esters. Mediates an enzymatic protection of low density lipoproteins against oxidative modification and the consequent series of events leading to atheroma formation. The protein is Serum paraoxonase/arylesterase 1 (PON1) of Homo sapiens (Human).